The primary structure comprises 130 residues: uncharacterized protein (130 aa).

This is an uncharacterized protein from Citrus leprosis virus C (isolate Citrus sinesis/Brazil/Cordeiropolis/2003) (CiLV-C).